A 388-amino-acid chain; its full sequence is Oxytocin receptor (388 aa).

Residues methionine 1–proline 32 are disordered. Over methionine 1–leucine 38 the chain is Extracellular. 2 N-linked (GlcNAc...) asparagine glycosylation sites follow: asparagine 8 and asparagine 26. Residues alanine 39–alanine 63 form a helical membrane-spanning segment. Residues leucine 64–leucine 74 lie on the Cytoplasmic side of the membrane. Residues phenylalanine 75–leucine 97 traverse the membrane as a helical segment. The Extracellular portion of the chain corresponds to leucine 98–arginine 113. A disulfide bridge links cysteine 112 with cysteine 187. The helical transmembrane segment at leucine 114–leucine 135 threads the bilayer. Topologically, residues aspartate 136–arginine 154 are cytoplasmic. The helical transmembrane segment at leucine 155–phenylalanine 175 threads the bilayer. At serine 176 to threonine 202 the chain is on the extracellular side. A helical transmembrane segment spans residues tryptophan 203–phenylalanine 225. The Cytoplasmic portion of the chain corresponds to lysine 226–lysine 274. Residues methionine 275–valine 293 traverse the membrane as a helical segment. Over glutamine 294 to serine 308 the chain is Extracellular. Residues alanine 309–phenylalanine 331 traverse the membrane as a helical segment. At threonine 332–alanine 388 the chain is on the cytoplasmic side. The segment at serine 354–alanine 388 is disordered. Residues serine 365 and serine 367 each carry the phosphoserine modification. Positions serine 365–alanine 388 are enriched in low complexity.

This sequence belongs to the G-protein coupled receptor 1 family. Vasopressin/oxytocin receptor subfamily.

The protein localises to the cell membrane. Its function is as follows. Receptor for oxytocin. The activity of this receptor is mediated by G proteins which activate a phosphatidylinositol-calcium second messenger system. The protein is Oxytocin receptor (Oxtr) of Rattus norvegicus (Rat).